Here is a 541-residue protein sequence, read N- to C-terminus: Glutamyl-tRNA(Gln) amidotransferase subunit B, mitochondrial (541 aa).

Belongs to the GatB/GatE family. GatB subfamily. As to quaternary structure, subunit of the heterotrimeric GatFAB amidotransferase (AdT) complex, composed of A (HER2), B (PET112) and F (YGR102C) subunits.

Its subcellular location is the mitochondrion. It catalyses the reaction L-glutamyl-tRNA(Gln) + L-glutamine + ATP + H2O = L-glutaminyl-tRNA(Gln) + L-glutamate + ADP + phosphate + H(+). Functionally, allows the formation of correctly charged Gln-tRNA(Gln) through the transamidation of misacylated Glu-tRNA(Gln) in the mitochondria. The reaction takes place in the presence of glutamine and ATP through an activated gamma-phospho-Glu-tRNA(Gln). This chain is Glutamyl-tRNA(Gln) amidotransferase subunit B, mitochondrial, found in Saccharomyces cerevisiae (strain ATCC 204508 / S288c) (Baker's yeast).